Reading from the N-terminus, the 901-residue chain is Protein translocase subunit SecA (901 aa).

ATP-binding positions include Gln89, 107–111 (GEGKT), and Asp502. Zn(2+) contacts are provided by Cys884, Cys886, Cys895, and His896.

This sequence belongs to the SecA family. In terms of assembly, monomer and homodimer. Part of the essential Sec protein translocation apparatus which comprises SecA, SecYEG and auxiliary proteins SecDF-YajC and YidC. The cofactor is Zn(2+).

The protein localises to the cell inner membrane. It localises to the cytoplasm. It carries out the reaction ATP + H2O + cellular proteinSide 1 = ADP + phosphate + cellular proteinSide 2.. In terms of biological role, part of the Sec protein translocase complex. Interacts with the SecYEG preprotein conducting channel. Has a central role in coupling the hydrolysis of ATP to the transfer of proteins into and across the cell membrane, serving both as a receptor for the preprotein-SecB complex and as an ATP-driven molecular motor driving the stepwise translocation of polypeptide chains across the membrane. The chain is Protein translocase subunit SecA from Sinorhizobium fredii (strain NBRC 101917 / NGR234).